A 122-amino-acid polypeptide reads, in one-letter code: MASVYENSYMIVLIFLLLGILLPVVALTLGKMLRPNKPSAAKATTYESGIEPFHDANIRFHARYYIFALLFVIFDVETLFLYPWAVAYDKLGLFALIEMLIFVVMLLVGLAYAWKKKVLQWL.

3 consecutive transmembrane segments (helical) span residues 10-30 (MIVLIFLLLGILLPVVALTLG), 66-86 (IFALLFVIFDVETLFLYPWAV), and 91-111 (LGLFALIEMLIFVVMLLVGLA).

Belongs to the complex I subunit 3 family. In terms of assembly, NDH-1 is composed of 14 different subunits. Subunits NuoA, H, J, K, L, M, N constitute the membrane sector of the complex.

The protein resides in the cell membrane. The enzyme catalyses a quinone + NADH + 5 H(+)(in) = a quinol + NAD(+) + 4 H(+)(out). In terms of biological role, NDH-1 shuttles electrons from NADH, via FMN and iron-sulfur (Fe-S) centers, to quinones in the respiratory chain. The immediate electron acceptor for the enzyme in this species is believed to be a menaquinone. Couples the redox reaction to proton translocation (for every two electrons transferred, four hydrogen ions are translocated across the cytoplasmic membrane), and thus conserves the redox energy in a proton gradient. The polypeptide is NADH-quinone oxidoreductase subunit A (Bacillus mycoides (strain KBAB4) (Bacillus weihenstephanensis)).